The chain runs to 233 residues: UPF0173 metal-dependent hydrolase Igni_1254 (233 aa).

Belongs to the UPF0173 family.

This is UPF0173 metal-dependent hydrolase Igni_1254 from Ignicoccus hospitalis (strain KIN4/I / DSM 18386 / JCM 14125).